The chain runs to 543 residues: MSSVLPTPVLPTPGRNINRGHFPDDFIFGAGTSSYQIEGAAREGGRGPSIWDTFTHTHPELIQDGSNGDTAINSYNLYKEDIKIVKLMGLDAYRFSISWPRILPGGSINAGINQEGIKYYNNLIDELLANDIVPYVTLFHWDVPQALQDQYDGFLSDKIVDDFRDFAELCFWEFGDRVKNWITINEPESYSNFFGVAYDTPPKAHALKASRLLVPTTVARPSKPVRVFASTADPGTTTADQVYKVGHNLLLAHAAAIQVYRDKFQNTQEGTFGMALVTQWMKPLNENNPADVEAASRAFDFKFGWFMQPLITGEYPKSMRQLLGPRLREFTPDQKKLLIGSYDYVGVNYYTATYVSSAQPPHDKKKAVFHTDGNFYTTDSKDGVLIGPLAGPAWLNIVPEGIYHVLQDIKENYEDPVIYITENGVYEVNDTAKTLSEARVDTTRLHYLQDHLSKVLEARHQGVRVQGYLVWSLMDNWELRAGYTSRFGLIHIDYYNNFARYPKDSAIWFRNAFHKRLRIHVNKARPQEDDGAFDTPRKRLRKY.

Residues glutamine 36, histidine 140, 185–186 (NE), tyrosine 350, glutamate 422, tryptophan 471, and phenylalanine 487 each bind a beta-D-glucoside. The active-site Proton donor is glutamate 186. The active-site Nucleophile is glutamate 422.

Belongs to the glycosyl hydrolase 1 family. In terms of tissue distribution, expressed in roots.

The protein resides in the cytoplasm. The protein localises to the cytosol. It carries out the reaction deacetylipecoside + H2O = deacetylipecoside aglycone + D-glucose. The enzyme catalyses deacetylisoipecoside + H2O = deacetylisoipecoside aglycone + D-glucose. It catalyses the reaction 6-O-methyldeacetylipecoside + H2O = 6-O-methyldeacetylipecoside aglycone + D-glucose. The catalysed reaction is 6-O-methyldeacetylisoipecoside + H2O = 6-O-methyldeacetylisoipecoside aglycone + D-glucose. It carries out the reaction ipecoside + H2O = ipecoside aglycone + D-glucose. The enzyme catalyses 3alpha(S)-strictosidine + H2O = strictosidine aglycone + D-glucose. The protein operates within alkaloid biosynthesis. Inhibited by Cu(2+), Fe(2+) and Zn(2+). Functionally, beta-glucosidase involved in the biosynthesis of ipecac and benzylisoquinoline monoterpenoid-isoquinoline alkaloids natural products, starting by the condensation of dopamine and secologanin, and including emetine and cephaeline, drugs used both as anti-protozoal (e.g. treatment of ameobiasis) and as emetic agents. In response to pathogen and herbivore attack, triggers the release of toxic ipecoside aglycon to trigger defense responses. Catalyzes deglucosylation both on (1S)-diastereomer and (1R)-diastereomer substrates, including ipecoside, the main alkaloidal glucoside. Also active on N-deacetylisoipecoside, 6-O-methyl-N-deacetylisoipecoside, 6-O-methyl-N-deacetylipecoside and N-deacetylipecoside. The chain is Ipecoside beta-D-glucosidase IpeGLU1 from Carapichea ipecacuanha (Ipecac).